The sequence spans 148 residues: Snaclec 3 (148 aa).

A signal peptide spans 1 to 23 (WGDSSSSASACWSCSSPLSGTEA). 3 disulfides stabilise this stretch: cysteine 27-cysteine 38, cysteine 55-cysteine 144, and cysteine 121-cysteine 136. The region spanning 34-145 (YDQNCYKAFE…CSGTHSFVCK (112 aa)) is the C-type lectin domain.

Belongs to the snaclec family. Heterodimer; disulfide-linked. Expressed by the venom gland.

The protein localises to the secreted. In terms of biological role, interferes with one step of hemostasis (modulation of platelet aggregation, or coagulation cascade, for example). The sequence is that of Snaclec 3 from Echis carinatus sochureki (Saw-scaled viper).